The sequence spans 415 residues: Histidine--tRNA ligase (415 aa).

Belongs to the class-II aminoacyl-tRNA synthetase family. As to quaternary structure, homodimer.

It localises to the cytoplasm. It catalyses the reaction tRNA(His) + L-histidine + ATP = L-histidyl-tRNA(His) + AMP + diphosphate + H(+). The sequence is that of Histidine--tRNA ligase from Rickettsia bellii (strain RML369-C).